A 361-amino-acid polypeptide reads, in one-letter code: Peptide chain release factor 1 (361 aa).

At Q237 the chain carries N5-methylglutamine. The tract at residues 285 to 306 (QAEQSAQQTEQRRQLVGSGDRS) is disordered.

This sequence belongs to the prokaryotic/mitochondrial release factor family. Methylated by PrmC. Methylation increases the termination efficiency of RF1.

It localises to the cytoplasm. In terms of biological role, peptide chain release factor 1 directs the termination of translation in response to the peptide chain termination codons UAG and UAA. This chain is Peptide chain release factor 1, found in Alkalilimnicola ehrlichii (strain ATCC BAA-1101 / DSM 17681 / MLHE-1).